The chain runs to 490 residues: MDPVVVLGLCLSCLLLLSLWKQSYGGGKLPPGPTPFPILGNILQIGIQDISKSFTKLSEVYGPVFTVYLGMKPTVVIHGYDAVKEALVDLGEEFSGRIVFPLTAKINKGYGIVFSNGKRWKETRRFSLMTLRDFGMGKRSIEDRVQEEARCLVEELRKTNGSPCNPTFILGAAPCNVICSVIFQNRFDYTDQDFLSLMGKLNENFKILNSPWVQMCNNFPILIDYLPGSHNKILRNNIYIRNYVLEKIKEHQETLDINNPRDFIDCFLIKMEQEKDNQQSEFTIENLMTTLSDVFGAGTETTSTTLRYGLLLLMKHPEVIAKVQEEIERVIGRHRSPCMQDRSRMPYTDATVHEIQRYINLIPNNVPRATTCNVKFRSYLIPKGTAVITSLTSMLYNDKEFPNPDRFDPGHFLDASGKFRKSDYFMPFSTGKRVCVGEVLARMELFLFLTAILQNFTPKPLVDPKDIDTTPLVSGLGRVPPLYQLSFIPA.

C435 contributes to the heme binding site.

Belongs to the cytochrome P450 family. Heme is required as a cofactor.

It localises to the endoplasmic reticulum membrane. The protein resides in the microsome membrane. The enzyme catalyses an organic molecule + reduced [NADPH--hemoprotein reductase] + O2 = an alcohol + oxidized [NADPH--hemoprotein reductase] + H2O + H(+). Its function is as follows. Cytochromes P450 are a group of heme-thiolate monooxygenases. In liver microsomes, this enzyme is involved in an NADPH-dependent electron transport pathway. It oxidizes a variety of structurally unrelated compounds, including steroids, fatty acids, and xenobiotics. In Oryctolagus cuniculus (Rabbit), this protein is Cytochrome P450 2C1 (CYP2C1).